Reading from the N-terminus, the 1328-residue chain is 5'-3' exoribonuclease 1 (1328 aa).

The tract at residues 1211-1328 is disordered; that stretch reads AGKNRKTNVS…VQPMGKLQIN (118 aa). Positions 1217-1231 are enriched in polar residues; it reads TNVSANNVSQGTDSR. Over residues 1275–1286 the composition is skewed to basic residues; it reads HKSKSKFSKGNH.

This sequence belongs to the 5'-3' exonuclease family. As to quaternary structure, monomer. Requires Mg(2+) as cofactor.

The protein localises to the cytoplasm. It is found in the perinuclear region. Its subcellular location is the P-body. Strand exchange activity is enhanced by fatty acid synthase (stimulatory factor P190/210). In terms of biological role, multifunctional protein that exhibits several independent functions at different levels of the cellular processes. 5'-3' exonuclease component of the nonsense-mediated mRNA decay (NMD) which is a highly conserved mRNA degradation pathway, an RNA surveillance system whose role is to identify and rid cells of mRNA with premature termination codons and thus prevents accumulation of potentially harmful truncated proteins. Involved in the degradation of several hypomodified mature tRNA species and participates in the 5'-processing or the degradation of the snoRNA precursors and rRNA processing. The sequence is that of 5'-3' exoribonuclease 1 (exo2) from Schizosaccharomyces pombe (strain 972 / ATCC 24843) (Fission yeast).